Here is a 458-residue protein sequence, read N- to C-terminus: Flavohemoprotein (458 aa).

The Globin domain maps to 2 to 158 (PLSEDTIKAV…LAHLFVRREE (157 aa)). Residue H107 participates in heme b binding. Residues Y117 and E157 each act as charge relay system in the active site. Residues 169–457 (GGWRQTRSFR…FEMFGPFKPL (289 aa)) are reductase. An FAD-binding FR-type domain is found at 172-279 (RQTRSFRVEE…APPYGDFFLE (108 aa)). FAD contacts are provided by residues Y211 and 228 to 231 (RQYS). 320–325 (GIGQTP) lines the NADP(+) pocket. 450–453 (MFGP) lines the FAD pocket.

This sequence belongs to the globin family. Two-domain flavohemoproteins subfamily. The protein in the C-terminal section; belongs to the flavoprotein pyridine nucleotide cytochrome reductase family. In terms of assembly, monomer. The cofactor is heme b. FAD serves as cofactor.

It catalyses the reaction 2 nitric oxide + NADPH + 2 O2 = 2 nitrate + NADP(+) + H(+). The enzyme catalyses 2 nitric oxide + NADH + 2 O2 = 2 nitrate + NAD(+) + H(+). Flavohemoprotein involved in nitric oxide (NO) detoxification in an aerobic process, termed nitric oxide dioxygenase (NOD) reaction that utilizes O(2) and NAD(P)H to convert NO to nitrate, which protects the protozoan parasite from various noxious nitrogen compounds. Therefore, plays a central role in the inducible response to nitrosative stress. May also be involved in O(2) detoxification. The polypeptide is Flavohemoprotein (hmpA) (Giardia intestinalis (strain ATCC 50581 / GS clone H7) (Giardia lamblia)).